The sequence spans 511 residues: Small ribosomal subunit protein uS4m (511 aa).

Positions 202–272 (KRLDVVLYRS…IKNNLFSNIN (71 aa)) constitute an S4 RNA-binding domain.

Belongs to the universal ribosomal protein uS4 family.

It localises to the mitochondrion. This chain is Small ribosomal subunit protein uS4m (RPS4), found in Prototheca wickerhamii.